A 928-amino-acid polypeptide reads, in one-letter code: Inner tegument protein (928 aa).

The interval 482 to 928 (WGGAVPANLA…LAGLRKLFVE (447 aa)) is interaction with large tegument protein.

This sequence belongs to the herpesviridae inner tegument protein family. In terms of assembly, interacts (via C-terminus) with the large tegument protein/LTP (via N-terminus).

It localises to the virion tegument. It is found in the host cytoplasm. Its subcellular location is the host nucleus. The protein localises to the host Golgi apparatus. The protein resides in the host trans-Golgi network. Plays an essential role in cytoplasmic secondary envelopment during viral egress. Interacts with the capsid via the large tegument protein/LTP and participates in its transport to the host trans-Golgi network (TGN) where secondary envelopment occurs. Modulates tegumentation and capsid accumulation at the viral assembly complex. The sequence is that of Inner tegument protein (ORF63) from Homo sapiens (Human).